We begin with the raw amino-acid sequence, 112 residues long: Small ribosomal subunit protein bS6 (112 aa).

The protein belongs to the bacterial ribosomal protein bS6 family.

Its function is as follows. Binds together with bS18 to 16S ribosomal RNA. This Legionella pneumophila (strain Paris) protein is Small ribosomal subunit protein bS6.